Reading from the N-terminus, the 266-residue chain is UPF0354 protein lin1649 (266 aa).

This sequence belongs to the UPF0354 family.

This chain is UPF0354 protein lin1649, found in Listeria innocua serovar 6a (strain ATCC BAA-680 / CLIP 11262).